The chain runs to 201 residues: MAEKFTQHTGLVVPLDAANVDTDAIIPKQFLQKVTRTGFGAHLFNDWRFLDEKGQQPNPEFVLNFPEYQGASILLARENFGCGSSREHAPWALTDYGFKVVIAPSFADIFYGNSFNNQLLPVTLSDAQVDELFALVKANPGIKFEVDLEAQVVKAGDKTYSFKIDDFRRHCMLNGLDSIGLTLQHEDAIAAYENKQPAFMR.

The protein belongs to the LeuD family. LeuD type 1 subfamily. Heterodimer of LeuC and LeuD.

The catalysed reaction is (2R,3S)-3-isopropylmalate = (2S)-2-isopropylmalate. It participates in amino-acid biosynthesis; L-leucine biosynthesis; L-leucine from 3-methyl-2-oxobutanoate: step 2/4. In terms of biological role, catalyzes the isomerization between 2-isopropylmalate and 3-isopropylmalate, via the formation of 2-isopropylmaleate. The polypeptide is 3-isopropylmalate dehydratase small subunit 1 (Salmonella typhimurium (strain LT2 / SGSC1412 / ATCC 700720)).